A 293-amino-acid polypeptide reads, in one-letter code: Cytidine deaminase 6 (293 aa).

CMP/dCMP-type deaminase domains lie at 16-147 (RGPS…FGPD) and 178-293 (EDCS…TNKN). Substrate is bound at residue 57-59 (NVE). His-70 is a Zn(2+) binding site. Glu-72 acts as the Proton donor in catalysis. Zn(2+)-binding residues include Cys-103 and Cys-106.

This sequence belongs to the cytidine and deoxycytidylate deaminase family. Homodimer. Zn(2+) is required as a cofactor.

The enzyme catalyses cytidine + H2O + H(+) = uridine + NH4(+). The catalysed reaction is 2'-deoxycytidine + H2O + H(+) = 2'-deoxyuridine + NH4(+). In terms of biological role, this enzyme scavenges exogenous and endogenous cytidine and 2'-deoxycytidine for UMP synthesis. In Arabidopsis thaliana (Mouse-ear cress), this protein is Cytidine deaminase 6 (CDA6).